Reading from the N-terminus, the 143-residue chain is ATP synthase subunit b' (143 aa).

Residues Ala-6–Phe-26 form a helical membrane-spanning segment.

Belongs to the ATPase B chain family. F-type ATPases have 2 components, F(1) - the catalytic core - and F(0) - the membrane proton channel. F(1) has five subunits: alpha(3), beta(3), gamma(1), delta(1), epsilon(1). F(0) has four main subunits: a(1), b(1), b'(1) and c(10-14). The alpha and beta chains form an alternating ring which encloses part of the gamma chain. F(1) is attached to F(0) by a central stalk formed by the gamma and epsilon chains, while a peripheral stalk is formed by the delta, b and b' chains.

It is found in the cellular thylakoid membrane. In terms of biological role, f(1)F(0) ATP synthase produces ATP from ADP in the presence of a proton or sodium gradient. F-type ATPases consist of two structural domains, F(1) containing the extramembraneous catalytic core and F(0) containing the membrane proton channel, linked together by a central stalk and a peripheral stalk. During catalysis, ATP synthesis in the catalytic domain of F(1) is coupled via a rotary mechanism of the central stalk subunits to proton translocation. Its function is as follows. Component of the F(0) channel, it forms part of the peripheral stalk, linking F(1) to F(0). The b'-subunit is a diverged and duplicated form of b found in plants and photosynthetic bacteria. This is ATP synthase subunit b' from Crocosphaera subtropica (strain ATCC 51142 / BH68) (Cyanothece sp. (strain ATCC 51142)).